We begin with the raw amino-acid sequence, 572 residues long: Putative inorganic phosphate transporter C8E4.01c (572 aa).

Residues 1–47 lie on the Cytoplasmic side of the membrane; the sequence is MAFGSKILNIGSKSDEYNDDAVPLDQVEEGAQERRYYLGLTKREFKL. A phosphoserine mark is found at serine 12 and serine 14. Residues 48–68 form a helical membrane-spanning segment; that stretch reads MMLAGVGFFLDSYDLFIINLV. The Extracellular segment spans residues 69–99; it reads TPIFEYLYWGGIEKGPTGKGHYPSGIRGLVN. The chain crosses the membrane as a helical span at residues 100-120; the sequence is ASANIGNIFGQLLFGFMGDFF. Residues 121–123 are Cytoplasmic-facing; the sequence is GRK. The helical transmembrane segment at 124 to 144 threads the bilayer; sequence FVYGKEMVIVIIATVLVIAMP. At 145–153 the chain is on the extracellular side; the sequence is KSIHSPLSK. The chain crosses the membrane as a helical span at residues 154–174; sequence MMWVFCWRWLLGVGIGGDYPM. At 175-193 the chain is on the cytoplasmic side; that stretch reads SAAITSERSKIKRRGTLIS. A helical transmembrane segment spans residues 194-214; the sequence is LIFAFQGFGTLAGAIVTIILL. The Extracellular segment spans residues 215–229; that stretch reads GCFEHPLNREGHYHK. A helical transmembrane segment spans residues 230 to 250; that stretch reads LEGVWRLQFGLALVPAIGVLI. The Cytoplasmic segment spans residues 251 to 346; sequence PRLIMKESKS…TYFRQWRHFK (96 aa). A disordered region spans residues 265 to 297; it reads KALNSAEGKDPKAFFNTDDEDNMKKSSSHGDSE. Residues 286–296 are compositionally biased toward basic and acidic residues; sequence NMKKSSSHGDS. Serine 292 and serine 296 each carry phosphoserine. Residues 347-367 traverse the membrane as a helical segment; it reads HLLGTSVCWFLLDIAFYGVNL. Topologically, residues 368–395 are extracellular; the sequence is NQSVILKNIGFSTGTNEYRTLMKNAIGN. The chain crosses the membrane as a helical span at residues 396-416; it reads LIIAVAGYVPGYWFNVFLVEI. Over 417-420 the chain is Cytoplasmic; that stretch reads LGRK. The helical transmembrane segment at 421-441 threads the bilayer; sequence WIQLQGFVITGLMFAILAGRW. Residues 442–449 are Extracellular-facing; sequence NEISTGGR. A helical transmembrane segment spans residues 450–470; that stretch reads FACFVIAQLFSNFGPNSTTFI. The Cytoplasmic segment spans residues 471-485; that stretch reads YPAEVFPARVRGTAH. The helical transmembrane segment at 486-506 threads the bilayer; that stretch reads GVSAALGKCGAILASLLFNFL. The Extracellular segment spans residues 507 to 508; it reads TG. A helical transmembrane segment spans residues 509–529; that stretch reads VIGYGNVMWIFCGCMWGGILF. Topologically, residues 530-572 are cytoplasmic; that stretch reads TLLLPETKGRDADEIDRLELFYGKDGKVQCDSKWKSWYFNGIF.

It belongs to the major facilitator superfamily. Sugar transporter (TC 2.A.1.1) family.

The protein resides in the membrane. Functionally, high-affinity transporter for external inorganic phosphate. In Schizosaccharomyces pombe (strain 972 / ATCC 24843) (Fission yeast), this protein is Putative inorganic phosphate transporter C8E4.01c.